A 206-amino-acid chain; its full sequence is Adenylate kinase (206 aa).

Position 10 to 15 (10 to 15) interacts with ATP; that stretch reads GAGKGT. The segment at 30-59 is NMP; sequence STGDILREAVQKGTPLGKKAKEYMERGELV. Residues threonine 31, 57 to 59, 82 to 85, and glutamine 89 contribute to the AMP site; these read ELV and GFPR. ATP is bound by residues arginine 120, arginine 124, and 133-134; that span reads VY. An LID region spans residues 123-153; sequence GRRINPETGEVYHVKYNPPPPGVKVIQREDD. An AMP-binding site is contributed by arginine 161. Lysine 189 is an ATP binding site.

The protein belongs to the adenylate kinase family. In terms of assembly, monomer.

The protein resides in the cytoplasm. The catalysed reaction is AMP + ATP = 2 ADP. Its pathway is purine metabolism; AMP biosynthesis via salvage pathway; AMP from ADP: step 1/1. In terms of biological role, catalyzes the reversible transfer of the terminal phosphate group between ATP and AMP. Plays an important role in cellular energy homeostasis and in adenine nucleotide metabolism. The chain is Adenylate kinase from Aquifex aeolicus (strain VF5).